Here is a 145-residue protein sequence, read N- to C-terminus: Male-specific protein scotti (145 aa).

The segment at 1–34 is disordered; it reads MANNRLMPEGQIIEEDMDGEDQNARELDIDDDDD. Residues 12–21 show a composition bias toward acidic residues; that stretch reads IIEEDMDGED.

Belongs to the male-specific scotti family.

In terms of biological role, post-meiotically transcribed gene that has a role in late spermiogenesis; required for actin cone progression during spermatid individualization. The sequence is that of Male-specific protein scotti from Drosophila willistoni (Fruit fly).